The following is a 321-amino-acid chain: Beta-lactamase (321 aa).

An N-terminal signal peptide occupies residues 1–30 (MEKNRKKQIVVLSIALVCIFILVFSLFHKS). Catalysis depends on Ser83, which acts as the Acyl-ester intermediate. 233–235 (KTG) provides a ligand contact to substrate.

It belongs to the class-A beta-lactamase family.

The catalysed reaction is a beta-lactam + H2O = a substituted beta-amino acid. Inhibited by clavulanic acid. Functionally, can hydrolyze cephalosporins, penicillins and also cefoxitin; but at a slow rate. The sequence is that of Beta-lactamase (cfxA) from Phocaeicola vulgatus (Bacteroides vulgatus).